A 365-amino-acid chain; its full sequence is MRMTRRRTKKTEIRNDSDSVRIDIVIEIVKRLPLKDVSRFLLVSKLWSEIIRSPYFIRSFPFLFSSIQPHLLYALNSLDKDKGHHKCCDIHYVSGLICFGYGQQQLITNPRTGKSIYLPKVKSRSKIIQSFFGYDPVYGQYKVLCMSERMNDYLNVPSSEHQVFTLGGVQKVEQSWRMIECNIHHRPKTNSVCMDGVLYYGAFTGGDMLEWCLMRFDVRTEKLDLVSRLNESSIQCYRPGHSPSLIKYHGKVALAFETSLHTFELWVMEDAEKWSKIRFSICHSMHLFGQDDDDAFLITGNIHTGEIIFAPYDCDVRFGMTHVVYYDLKTNRLRFRTVAFDLGTLFPQISVMVPFFDYVESAMLL.

The 48-residue stretch at 15–62 (NDSDSVRIDIVIEIVKRLPLKDVSRFLLVSKLWSEIIRSPYFIRSFPF) folds into the F-box domain.

The sequence is that of Putative F-box protein At1g31000 from Arabidopsis thaliana (Mouse-ear cress).